Reading from the N-terminus, the 937-residue chain is Isoleucine--tRNA ligase (937 aa).

A 'HIGH' region motif is present at residues 58–68; the sequence is PYANGTLHLGH. Residue glutamate 561 coordinates L-isoleucyl-5'-AMP. Residues 602-606 carry the 'KMSKS' region motif; sequence KMSKS. Lysine 605 lines the ATP pocket. Zn(2+) contacts are provided by cysteine 900, cysteine 903, cysteine 920, and cysteine 923.

The protein belongs to the class-I aminoacyl-tRNA synthetase family. IleS type 1 subfamily. As to quaternary structure, monomer. It depends on Zn(2+) as a cofactor.

It localises to the cytoplasm. The enzyme catalyses tRNA(Ile) + L-isoleucine + ATP = L-isoleucyl-tRNA(Ile) + AMP + diphosphate. Catalyzes the attachment of isoleucine to tRNA(Ile). As IleRS can inadvertently accommodate and process structurally similar amino acids such as valine, to avoid such errors it has two additional distinct tRNA(Ile)-dependent editing activities. One activity is designated as 'pretransfer' editing and involves the hydrolysis of activated Val-AMP. The other activity is designated 'posttransfer' editing and involves deacylation of mischarged Val-tRNA(Ile). This is Isoleucine--tRNA ligase from Histophilus somni (strain 2336) (Haemophilus somnus).